Reading from the N-terminus, the 186-residue chain is Trafficking protein particle complex subunit 5 (186 aa).

It belongs to the TRAPP small subunits family. BET3 subfamily. Part of the multisubunit TRAPP (transport protein particle) complex.

The protein localises to the golgi apparatus. The protein resides in the cis-Golgi network. It is found in the endoplasmic reticulum. Functionally, may play a role in vesicular transport from endoplasmic reticulum to Golgi. The chain is Trafficking protein particle complex subunit 5 (trappc5) from Dictyostelium discoideum (Social amoeba).